Reading from the N-terminus, the 330-residue chain is tRNA U34 carboxymethyltransferase (330 aa).

Carboxy-S-adenosyl-L-methionine-binding positions include lysine 91, tryptophan 105, lysine 110, glycine 130, 152 to 154 (DPS), 181 to 182 (IE), methionine 196, tyrosine 200, and arginine 315.

It belongs to the class I-like SAM-binding methyltransferase superfamily. CmoB family. Homotetramer.

The enzyme catalyses carboxy-S-adenosyl-L-methionine + 5-hydroxyuridine(34) in tRNA = 5-carboxymethoxyuridine(34) in tRNA + S-adenosyl-L-homocysteine + H(+). Its function is as follows. Catalyzes carboxymethyl transfer from carboxy-S-adenosyl-L-methionine (Cx-SAM) to 5-hydroxyuridine (ho5U) to form 5-carboxymethoxyuridine (cmo5U) at position 34 in tRNAs. The sequence is that of tRNA U34 carboxymethyltransferase from Shewanella denitrificans (strain OS217 / ATCC BAA-1090 / DSM 15013).